A 348-amino-acid chain; its full sequence is Methylthioribose-1-phosphate isomerase (348 aa).

Substrate contacts are provided by residues 51–53, Arg94, and Gln199; that span reads RGA. The Proton donor role is filled by Asp240. Residue 250-251 coordinates substrate; it reads NK.

This sequence belongs to the eIF-2B alpha/beta/delta subunits family. MtnA subfamily.

It catalyses the reaction 5-(methylsulfanyl)-alpha-D-ribose 1-phosphate = 5-(methylsulfanyl)-D-ribulose 1-phosphate. It participates in amino-acid biosynthesis; L-methionine biosynthesis via salvage pathway; L-methionine from S-methyl-5-thio-alpha-D-ribose 1-phosphate: step 1/6. Functionally, catalyzes the interconversion of methylthioribose-1-phosphate (MTR-1-P) into methylthioribulose-1-phosphate (MTRu-1-P). In Nitrosococcus oceani (strain ATCC 19707 / BCRC 17464 / JCM 30415 / NCIMB 11848 / C-107), this protein is Methylthioribose-1-phosphate isomerase.